The following is an 80-amino-acid chain: Cell division protein ZapB (80 aa).

Residues 3 to 80 (FEVLEQLESK…ALLGKMDEVE (78 aa)) are a coiled coil. Residues 41–53 (ANELRSQREELEQ) are compositionally biased toward basic and acidic residues. The tract at residues 41-60 (ANELRSQREELEQKSQQAQQ) is disordered.

It belongs to the ZapB family. Homodimer. The ends of the coiled-coil dimer bind to each other, forming polymers. Interacts with FtsZ.

The protein resides in the cytoplasm. In terms of biological role, non-essential, abundant cell division factor that is required for proper Z-ring formation. It is recruited early to the divisome by direct interaction with FtsZ, stimulating Z-ring assembly and thereby promoting cell division earlier in the cell cycle. Its recruitment to the Z-ring requires functional FtsA or ZipA. The sequence is that of Cell division protein ZapB from Vibrio campbellii (strain ATCC BAA-1116).